Consider the following 477-residue polypeptide: MKVTVENKKGLNKDIKVFIDKETMNSYMDEKYEEIKKTVNLKGFRPGKVPKEVLKRQFGQAIFSEVLDKVLKDTSVKALEDNKIKPAGQPKLDLKTYGEDKDLEYVMSITELPKVELKSVENIKFDEYSVKIDTNETDKRIKEIAKSQNNFKEVAADVRAVEENLVIFDYKATIDGKDFTGGEGKNTQLILGKDLFIKGFDKQLIGVKKNDEKSVDVTLPENYPQKEYANKKANFICKITEVKKSEEVKIDDVFAKNLGAKDLADLKVLVSKQINDEYKNSLDKLAKTQILKEIENFKVDEIPENLIEEEVKILSQGMTEEDSKKSRKNFEEIAKKRIKVGLILNEFGEQNKIKVTEQEVQAEVQKQLRMMPGQEKMVMEFYQKNPSALASLRGTVYEEKIIDLIKTKAKPSKKEISKEEAEKILKEHQKQDHNHEHDHNHDHDHPEEKKASKSTKIEKKPKPSASKKPSTKKVSKK.

Residues Glu163–Val248 enclose the PPIase FKBP-type domain. Basic and acidic residues predominate over residues Lys408–Pro461. The interval Lys408 to Lys477 is disordered.

This sequence belongs to the FKBP-type PPIase family. Tig subfamily.

It is found in the cytoplasm. The catalysed reaction is [protein]-peptidylproline (omega=180) = [protein]-peptidylproline (omega=0). Involved in protein export. Acts as a chaperone by maintaining the newly synthesized protein in an open conformation. Functions as a peptidyl-prolyl cis-trans isomerase. The sequence is that of Trigger factor from Pelagibacter ubique (strain HTCC1062).